A 1155-amino-acid polypeptide reads, in one-letter code: DNA-directed RNA polymerase subunit beta (1155 aa).

The protein belongs to the RNA polymerase beta chain family. In terms of assembly, the RNAP catalytic core consists of 2 alpha, 1 beta, 1 beta' and 1 omega subunit. When a sigma factor is associated with the core the holoenzyme is formed, which can initiate transcription.

The enzyme catalyses RNA(n) + a ribonucleoside 5'-triphosphate = RNA(n+1) + diphosphate. DNA-dependent RNA polymerase catalyzes the transcription of DNA into RNA using the four ribonucleoside triphosphates as substrates. The protein is DNA-directed RNA polymerase subunit beta of Borreliella burgdorferi (strain ZS7) (Borrelia burgdorferi).